Here is a 188-residue protein sequence, read N- to C-terminus: Putative manganese efflux pump MntP (188 aa).

6 helical membrane-spanning segments follow: residues 3–23 (ISAT…ASIG), 41–61 (LIFG…GMLA), 62–82 (SQFI…FLGG), 106–128 (WILV…GLAF), 143–163 (ATLI…PLLG), and 168–188 (ILGG…HFAG).

The protein belongs to the MntP (TC 9.B.29) family.

It localises to the cell inner membrane. In terms of biological role, probably functions as a manganese efflux pump. The chain is Putative manganese efflux pump MntP from Enterobacter sp. (strain 638).